Here is a 4998-residue protein sequence, read N- to C-terminus: SCO-spondin (4998 aa).

Residues 1-17 form the signal peptide; that stretch reads MLPLALLFGMLWTQANG. Positions 18–102 constitute an EMI domain; that stretch reads HWCEQIETVH…ACCPGWGGAH (85 aa). In terms of domain architecture, VWFD 1 spans 72 to 241; it reads GLCAIYKPPE…KLPGSEPGCL (170 aa). Cystine bridges form between Cys-74-Cys-202 and Cys-103-Cys-240. N-linked (GlcNAc...) asparagine glycosylation is found at Asn-88 and Asn-130. Residues 349 to 404 enclose the TIL 1 domain; that stretch reads CPGGQLYSDCVSSCPPSCSAVAQGEEGSCGKECVSGCECPTGLFWDGALCVPAAHC. One can recognise a VWFC 1 domain in the interval 404 to 496; that stretch reads CPCYHRRQRY…HGACDTGSCL (93 aa). Residues 442 to 615 form the VWFD 2 domain; the sequence is AECAVGGDGH…FQVSGDGRCP (174 aa). Intrachain disulfides connect Cys-444–Cys-577 and Cys-468–Cys-614. Residues Asn-534 and Asn-698 are each glycosylated (N-linked (GlcNAc...) asparagine). A TIL 2 domain is found at 706–759; the sequence is CPGGQVYQECAPVCGHHCGEPEDCKELGICVAGCNCPPGLLWDLEGQCVPPSMC. N-linked (GlcNAc...) asparagine glycosylation is found at Asn-771, Asn-790, Asn-824, and Asn-866. Residues 892 to 1062 form the VWFD 3 domain; it reads GWCQASGAPH…HSWRLNPLCP (171 aa). Disulfide bonds link Cys-894–Cys-1026, Cys-916–Cys-1061, and Cys-937–Cys-944. One can recognise a TIL 3 domain in the interval 1153–1209; the sequence is CEGGQVYEPCGSTCPPTCHDHHSELRWHCQVITCVEGCFCPEGTLLHGGACMKLAAC. N-linked (GlcNAc...) asparagine glycosylation occurs at Asn-1230. 4 LDL-receptor class A domains span residues 1253-1290, 1293-1328, 1329-1365, and 1369-1407; these read GCAEGETLCRENGHCVPLEWLCDNQDDCGDGSDEEGCA, VCGEGQMSCQSGHCLPLSLICDGQDDCGDGTDEQGC, LCPHGSLACADGRCLPPALLCNGHPDCLDAADEESCL, and SCISGEVSCVDGTCVRTIQLCDGVWDCPDGADEGPSHCS. 12 disulfide bridges follow: Cys-1254-Cys-1267, Cys-1261-Cys-1280, Cys-1274-Cys-1289, Cys-1294-Cys-1306, Cys-1301-Cys-1319, Cys-1313-Cys-1328, Cys-1330-Cys-1342, Cys-1337-Cys-1355, Cys-1349-Cys-1364, Cys-1370-Cys-1382, Cys-1377-Cys-1395, and Cys-1389-Cys-1406. The segment at 1406-1440 is disordered; it reads CSLPSLPTPPGGIGQNPSTSSLDTAPSPVGSTSPA. Polar residues predominate over residues 1420–1440; it reads QNPSTSSLDTAPSPVGSTSPA. LDL-receptor class A domains are found at residues 1442–1478 and 1480–1519; these read PCSLLEFQCNSGECTPRGWRCDQEEDCTDGSDELDCG and PCMLYQVPCAHSPHCVSPGQLCDGVTQCPDGSDEDPDVCE. 6 cysteine pairs are disulfide-bonded: Cys-1443–Cys-1455, Cys-1450–Cys-1468, Cys-1462–Cys-1477, Cys-1481–Cys-1494, Cys-1488–Cys-1507, and Cys-1501–Cys-1518. Residue Asn-1528 is glycosylated (N-linked (GlcNAc...) asparagine). In terms of domain architecture, LDL-receptor class A 7 spans 1533–1571; the sequence is PCPEFSCPDGTCIDFLLVCDGNPDCELADETEPSLDEQG. Disulfide bonds link Cys-1534/Cys-1544, Cys-1539/Cys-1557, Cys-1551/Cys-1572, Cys-1584/Cys-1620, Cys-1588/Cys-1625, Cys-1599/Cys-1610, Cys-1640/Cys-1680, Cys-1644/Cys-1685, and Cys-1654/Cys-1664. 2 TSP type-1 domains span residues 1572–1626 and 1628–1686; these read CGAW…EACP and DGEW…EGCL. Asn-1598 carries an N-linked (GlcNAc...) asparagine glycan. Asn-1687 carries N-linked (GlcNAc...) asparagine glycosylation. The TIL 4 domain occupies 1692-1746; the sequence is GELVFRTCAPCPLTCDDISGQAACPPDRPCSSPGCWCPDGKVLNTEGQCVRPRQC. EGF-like domains follow at residues 1702–1741 and 1742–1768; these read CPLTCDDISGQAACPPDRPCSSPGCWCPDGKVLNTEGQCV and RPRQCPCLVDGAHYWPGQRIKMDCQLC. Residues 1771 to 1827 enclose the TSP type-1 3 domain; the sequence is DCGWSSWSPWAECLGPCSSQSLQWSFRSPNNPRLSGHGRQCRGIHRKARRCQTEACE. Intrachain disulfides connect Cys-1772/Cys-1811, Cys-1783/Cys-1787, and Cys-1821/Cys-1826. The VWFC 2 domain occupies 1827–1887; that stretch reads EGCEQWGLMY…GMGESCCHCA (61 aa). Asn-1892 and Asn-1989 each carry an N-linked (GlcNAc...) asparagine glycan. The 157-residue stretch at 1929–2085 folds into the F5/8 type C domain; it reads CYSPLGLAGL…IFLWVELLGL (157 aa). One can recognise an LDL-receptor class A 8 domain in the interval 2091–2127; that stretch reads LCPGSRHRCASGECAPKGGPCDGAVDCDDGSDEEGCG. Intrachain disulfides connect Cys-2092-Cys-2104, Cys-2099-Cys-2117, and Cys-2111-Cys-2126. Positions 2119 to 2209 are disordered; the sequence is DGSDEEGCGS…TFPPGAKSLH (91 aa). The span at 2130-2144 shows a compositional bias: polar residues; that stretch reads HASTTSRTPALSPTQ. Positions 2148–2158 are enriched in basic and acidic residues; it reads FPREVSEDLRQ. Polar residues-rich tracts occupy residues 2164–2173 and 2190–2201; these read TSHSPPSSGE and QPMQTLSATSTF. 2 LDL-receptor class A domains span residues 2242 to 2278 and 2299 to 2335; these read PCGPGQVPCDVLGCVEQEQLCDGREDCLDGSDEQHCA and LCSPSQLRCGSGECLPFEHRCDLQVNCQDGSDEDNCV. Disulfide bonds link Cys-2243–Cys-2255, Cys-2250–Cys-2268, Cys-2262–Cys-2277, Cys-2300–Cys-2312, Cys-2307–Cys-2325, Cys-2319–Cys-2334, Cys-2337–Cys-2373, Cys-2348–Cys-2352, Cys-2383–Cys-2388, Cys-2403–Cys-2440, Cys-2407–Cys-2445, and Cys-2418–Cys-2430. 2 consecutive TSP type-1 domains span residues 2336–2389 and 2391–2446; these read DCVL…QACP and AGAW…QLCP. Residues 2468-2511 enclose the TIL 5 domain; that stretch reads VPPCPPSCLDPEANRSCSGHCMEGCRCPPGLLLQDSHCLPLSEC. Asn-2481 and Asn-2530 each carry an N-linked (GlcNAc...) asparagine glycan. TSP type-1 domains lie at 2551–2605, 2609–2664, and 2666–2719; these read SCGW…TDCG, PGWT…PVCP, and PSAW…HPCT. 9 disulfides stabilise this stretch: Cys-2552/Cys-2590, Cys-2563/Cys-2567, Cys-2600/Cys-2604, Cys-2620/Cys-2658, Cys-2624/Cys-2663, Cys-2640/Cys-2648, Cys-2678/Cys-2713, Cys-2682/Cys-2718, and Cys-2693/Cys-2703. Asn-2772 and Asn-2802 each carry an N-linked (GlcNAc...) asparagine glycan. TSP type-1 domains are found at residues 2820–2875 and 2876–2919; these read ACGW…RPCR and GPGA…QPCA. 3 disulfide bridges follow: Cys-2821-Cys-2859, Cys-2832-Cys-2836, and Cys-2869-Cys-2874. Residues Asn-2897, Asn-2952, Asn-2999, and Asn-3009 are each glycosylated (N-linked (GlcNAc...) asparagine). Residues 2926-2978 enclose the TIL 6 domain; sequence CPEDQQWLDCAQGPASCAHLSIPGEANQTCHPGCYCLSGMLLLNNVCVPVQDC. 2 TSP type-1 domains span residues 3019–3086 and 3088–3143; these read QPAW…PGCN and AGGW…QPCP. Cystine bridges form between Cys-3031–Cys-3080, Cys-3035–Cys-3085, Cys-3046–Cys-3070, Cys-3100–Cys-3137, Cys-3104–Cys-3142, and Cys-3115–Cys-3127. Asn-3146 is a glycosylation site (N-linked (GlcNAc...) asparagine). Residues 3151–3201 enclose the TIL 7 domain; the sequence is EGAEYSPCGPPCPRSCDDLVHCVWRCQPGCYCPLGKVLSADGAICVKPSYC. Asn-3235 carries an N-linked (GlcNAc...) asparagine glycan. TSP type-1 domains follow at residues 3244–3306 and 3308–3363; these read SGDW…TACP and DGAW…TLCT. 6 cysteine pairs are disulfide-bonded: Cys-3256/Cys-3299, Cys-3260/Cys-3305, Cys-3271/Cys-3283, Cys-3320/Cys-3355, Cys-3323/Cys-3362, and Cys-3333/Cys-3345. N-linked (GlcNAc...) asparagine glycosylation occurs at Asn-3301. Asn-3357 carries N-linked (GlcNAc...) asparagine glycosylation. Positions 3365–3421 constitute a TIL 8 domain; that stretch reads CGGGQDLLPCGQPCPHSCQDLSLGSTCQPGSAGCQSGCGCPPGQLSQDGLCVFPVDC. Residues Asn-3435 and Asn-3462 are each glycosylated (N-linked (GlcNAc...) asparagine). Residues 3481 to 3529 enclose the TSP type-1 15 domain; sequence PGIWSSWGPWEKCSVSCGGGEQLRSRQCARPPCPGLAQQSRICHIHVCR. Cystine bridges form between Cys-3493–Cys-3523, Cys-3497–Cys-3528, and Cys-3508–Cys-3513. An N-linked (GlcNAc...) asparagine glycan is attached at Asn-3638. TSP type-1 domains are found at residues 3657 to 3713, 3727 to 3779, 3793 to 3849, and 3851 to 3906; these read HGSF…PECP, AGGW…PSCA, NCFW…RACP, and PGGW…MPCE. Disulfide bonds link Cys-3669/Cys-3707, Cys-3673/Cys-3712, and Cys-3685/Cys-3697. The N-linked (GlcNAc...) asparagine glycan is linked to Asn-3761. 6 disulfide bridges follow: Cys-3794-Cys-3830, Cys-3805-Cys-3809, Cys-3843-Cys-3848, Cys-3863-Cys-3900, Cys-3867-Cys-3905, and Cys-3878-Cys-3890. The TIL 9 domain maps to 3909–3964; it reads CPAGMEMVSCANHCPYSCSDLQEGGMCQEDQACQLGCRCSEGFLEQDGGCVPVGHC. The N-linked (GlcNAc...) asparagine glycan is linked to Asn-3986. TSP type-1 domains are found at residues 4006-4059, 4100-4155, 4157-4213, and 4215-4269; these read HCAW…VPCP, PRGW…QLCL, KLER…GPCQ, and DCTW…GNCS. Intrachain disulfides connect Cys-4007–Cys-4043, Cys-4018–Cys-4022, Cys-4053–Cys-4058, Cys-4112–Cys-4149, Cys-4116–Cys-4154, Cys-4127–Cys-4139, Cys-4169–Cys-4207, Cys-4173–Cys-4212, Cys-4184–Cys-4195, Cys-4216–Cys-4253, Cys-4227–Cys-4229, and Cys-4263–Cys-4268. N-linked (GlcNAc...) asparagine glycosylation is present at Asn-4196. Asn-4267 carries N-linked (GlcNAc...) asparagine glycosylation. In terms of domain architecture, TIL 10 spans 4273–4328; sequence CPPPFEFQSCGSPCAGLCATHLNHRLCQDLPPCQPGCYCPKGLLEQAGSCILPEQC. Residues Asn-4408 and Asn-4463 are each glycosylated (N-linked (GlcNAc...) asparagine). Residues 4465–4516 enclose the TSP type-1 24 domain; that stretch reads TCQWGPWGPWSPCQMPCSGGFKLRWRVARDTSAGECPGPWAQTESCNMGSCP. 3 cysteine pairs are disulfide-bonded: Cys-4466-Cys-4500, Cys-4477-Cys-4481, and Cys-4510-Cys-4515. A TIL 11 domain is found at 4530 to 4576; the sequence is DCANQCPRSCADLWDGVQCLQGPCSPGCRCPPGQLVQDGHCVPISSC. Asn-4584, Asn-4601, and Asn-4606 each carry an N-linked (GlcNAc...) asparagine glycan. Positions 4616–4669 constitute a TSP type-1 25 domain; sequence CPVLGPWSAWSECSAVCGKGTMVRHRSCEEHPDREPCQALDLQQWQECNLQACP. Cystine bridges form between Cys-4628–Cys-4663, Cys-4632–Cys-4668, and Cys-4643–Cys-4652. The TIL 12 domain occupies 4671–4725; the sequence is CPPGQVLSTCATMCPSLCSHLWPGTICVREPCQLGCGCPGGQLLYNGTCIPPEAC. 4 N-linked (GlcNAc...) asparagine glycosylation sites follow: Asn-4716, Asn-4756, Asn-4799, and Asn-4806. The TIL 13 domain maps to 4777 to 4835; sequence CAPGEIWQHGKLGPCEKTCPEMNMTQAWSNCTEAQAPGCVCQLGYFRSQTGLCVPEDHC. Residues 4835 to 4893 form the VWFC 3 domain; that stretch reads CECWHHGSPHLPGSEWQEACESCRCLHGKSVCIRHCPELSCAQGEVIMQEPGSCCPICQ. 4 disulfide bridges follow: Cys-4892-Cys-4952, Cys-4918-Cys-4969, Cys-4928-Cys-4985, and Cys-4932-Cys-4987. The 100-residue stretch at 4892–4991 folds into the CTCK domain; it reads CQQDTLKEEP…IHSCQCSACQ (100 aa). N-linked (GlcNAc...) asparagine glycosylation occurs at Asn-4912.

This sequence belongs to the thrombospondin family. Subcommissural organ.

The protein localises to the secreted. The protein resides in the extracellular space. In terms of biological role, involved in the modulation of neuronal aggregation. May be involved in developmental events during the formation of the central nervous system. The chain is SCO-spondin from Mus musculus (Mouse).